The primary structure comprises 330 residues: Ribosomal RNA small subunit methyltransferase C (330 aa).

The protein belongs to the methyltransferase superfamily. RsmC family. Monomer.

It localises to the cytoplasm. The catalysed reaction is guanosine(1207) in 16S rRNA + S-adenosyl-L-methionine = N(2)-methylguanosine(1207) in 16S rRNA + S-adenosyl-L-homocysteine + H(+). Its function is as follows. Specifically methylates the guanine in position 1207 of 16S rRNA in the 30S particle. This Haemophilus influenzae (strain 86-028NP) protein is Ribosomal RNA small subunit methyltransferase C.